Here is a 377-residue protein sequence, read N- to C-terminus: Nitric oxide reductase FlRd-NAD(+) reductase (377 aa).

This sequence belongs to the FAD-dependent oxidoreductase family. The cofactor is FAD.

Its subcellular location is the cytoplasm. The catalysed reaction is 2 reduced [nitric oxide reductase rubredoxin domain] + NAD(+) + H(+) = 2 oxidized [nitric oxide reductase rubredoxin domain] + NADH. It participates in nitrogen metabolism; nitric oxide reduction. Functionally, one of at least two accessory proteins for anaerobic nitric oxide (NO) reductase. Reduces the rubredoxin moiety of NO reductase. The polypeptide is Nitric oxide reductase FlRd-NAD(+) reductase (Escherichia coli (strain 55989 / EAEC)).